Here is a 184-residue protein sequence, read N- to C-terminus: ATP-dependent protease subunit HslV (184 aa).

Thr-12 is an active-site residue. The Na(+) site is built by Gly-167, Cys-170, and Thr-173.

Belongs to the peptidase T1B family. HslV subfamily. A double ring-shaped homohexamer of HslV is capped on each side by a ring-shaped HslU homohexamer. The assembly of the HslU/HslV complex is dependent on binding of ATP.

It localises to the cytoplasm. It carries out the reaction ATP-dependent cleavage of peptide bonds with broad specificity.. With respect to regulation, allosterically activated by HslU binding. Protease subunit of a proteasome-like degradation complex believed to be a general protein degrading machinery. This chain is ATP-dependent protease subunit HslV, found in Wolbachia sp. subsp. Drosophila simulans (strain wRi).